The following is a 376-amino-acid chain: Succinyl-diaminopimelate desuccinylase (376 aa).

His67 is a binding site for Zn(2+). Asp69 is an active-site residue. Asp100 serves as a coordination point for Zn(2+). The active-site Proton acceptor is the Glu134. 3 residues coordinate Zn(2+): Glu135, Glu163, and His349.

It belongs to the peptidase M20A family. DapE subfamily. In terms of assembly, homodimer. It depends on Zn(2+) as a cofactor. Requires Co(2+) as cofactor.

It carries out the reaction N-succinyl-(2S,6S)-2,6-diaminopimelate + H2O = (2S,6S)-2,6-diaminopimelate + succinate. Its pathway is amino-acid biosynthesis; L-lysine biosynthesis via DAP pathway; LL-2,6-diaminopimelate from (S)-tetrahydrodipicolinate (succinylase route): step 3/3. In terms of biological role, catalyzes the hydrolysis of N-succinyl-L,L-diaminopimelic acid (SDAP), forming succinate and LL-2,6-diaminopimelate (DAP), an intermediate involved in the bacterial biosynthesis of lysine and meso-diaminopimelic acid, an essential component of bacterial cell walls. The protein is Succinyl-diaminopimelate desuccinylase of Xanthomonas campestris pv. campestris (strain 8004).